The following is a 183-amino-acid chain: Translation initiation factor IF-3 (183 aa).

It belongs to the IF-3 family. As to quaternary structure, monomer.

The protein resides in the cytoplasm. Its function is as follows. IF-3 binds to the 30S ribosomal subunit and shifts the equilibrium between 70S ribosomes and their 50S and 30S subunits in favor of the free subunits, thus enhancing the availability of 30S subunits on which protein synthesis initiation begins. This is Translation initiation factor IF-3 from Yersinia pseudotuberculosis serotype O:1b (strain IP 31758).